The following is a 263-amino-acid chain: NADH dehydrogenase [ubiquinone] iron-sulfur protein 3, mitochondrial (263 aa).

The N-terminal 35 residues, 1-35 (MVAAVARLWWRGLLGASALTRGAGRPSVLLLPVRR), are a transit peptide targeting the mitochondrion.

This sequence belongs to the complex I 30 kDa subunit family. Core subunit of respiratory chain NADH dehydrogenase (Complex I) which is composed of 45 different subunits. Interacts with NDUFAF3. Interacts with RAB5IF. Found in subcomplexes containing subunits NDUFS2, MT-ND1 and NDUFA13.

The protein localises to the mitochondrion inner membrane. The catalysed reaction is a ubiquinone + NADH + 5 H(+)(in) = a ubiquinol + NAD(+) + 4 H(+)(out). Functionally, core subunit of the mitochondrial membrane respiratory chain NADH dehydrogenase (Complex I) which catalyzes electron transfer from NADH through the respiratory chain, using ubiquinone as an electron acceptor. Essential for the catalytic activity and assembly of complex I. The sequence is that of NADH dehydrogenase [ubiquinone] iron-sulfur protein 3, mitochondrial (NDUFS3) from Pongo pygmaeus (Bornean orangutan).